Here is a 937-residue protein sequence, read N- to C-terminus: Protein translocase subunit SecA (937 aa).

Residues glutamine 87, 105-109 (GEGKT), and aspartate 494 each bind ATP. Positions 881 to 937 (RGLNYIGPDEGGRASVHSDAEEYGGGTPAAAGTRRERREAARAEGKGKRGPKSRRKH) are disordered. Composition is skewed to basic and acidic residues over residues 890–900 (EGGRASVHSDA) and 913–927 (TRRERREAARAEGKG). Residues 928-937 (KRGPKSRRKH) show a composition bias toward basic residues.

This sequence belongs to the SecA family. As to quaternary structure, monomer and homodimer. Part of the essential Sec protein translocation apparatus which comprises SecA, SecYEG and auxiliary proteins SecDF. Other proteins may also be involved.

It is found in the cell membrane. The protein resides in the cytoplasm. It carries out the reaction ATP + H2O + cellular proteinSide 1 = ADP + phosphate + cellular proteinSide 2.. Functionally, part of the Sec protein translocase complex. Interacts with the SecYEG preprotein conducting channel. Has a central role in coupling the hydrolysis of ATP to the transfer of proteins into and across the cell membrane, serving as an ATP-driven molecular motor driving the stepwise translocation of polypeptide chains across the membrane. The protein is Protein translocase subunit SecA of Nocardia farcinica (strain IFM 10152).